The sequence spans 191 residues: Signal peptidase IB (191 aa).

Over 1-7 the chain is Cytoplasmic; the sequence is MKKEILE. Residues 8-28 traverse the membrane as a helical segment; sequence WIISIAVAFVILFIVGKFIVT. Over 29–191 the chain is Extracellular; that stretch reads PYTIKGESMD…HNFNPENTKN (163 aa). Residues Ser-36 and Lys-77 contribute to the active site.

Belongs to the peptidase S26 family.

The protein resides in the cell membrane. It catalyses the reaction Cleavage of hydrophobic, N-terminal signal or leader sequences from secreted and periplasmic proteins.. Its function is as follows. Essential for cell viability. This Staphylococcus aureus (strain COL) protein is Signal peptidase IB (spsB).